Consider the following 284-residue polypeptide: Bifunctional protein FolD (284 aa).

NADP(+)-binding positions include 166–168 (GAS), Ser191, and Ile232.

This sequence belongs to the tetrahydrofolate dehydrogenase/cyclohydrolase family. As to quaternary structure, homodimer.

The enzyme catalyses (6R)-5,10-methylene-5,6,7,8-tetrahydrofolate + NADP(+) = (6R)-5,10-methenyltetrahydrofolate + NADPH. It catalyses the reaction (6R)-5,10-methenyltetrahydrofolate + H2O = (6R)-10-formyltetrahydrofolate + H(+). It participates in one-carbon metabolism; tetrahydrofolate interconversion. Its function is as follows. Catalyzes the oxidation of 5,10-methylenetetrahydrofolate to 5,10-methenyltetrahydrofolate and then the hydrolysis of 5,10-methenyltetrahydrofolate to 10-formyltetrahydrofolate. The sequence is that of Bifunctional protein FolD from Neisseria meningitidis serogroup C (strain 053442).